A 1020-amino-acid chain; its full sequence is Sodium/potassium-transporting ATPase subunit alpha-2 (1020 aa).

A propeptide spanning residues 1-5 (MGRGA) is cleaved from the precursor. Positions 1-31 (MGRGAGREYSPAATTAENGGGKKKQKEKELD) are disordered. The Cytoplasmic segment spans residues 6–85 (GREYSPAATT…NALTPPPTTP (80 aa)). Residue serine 10 is modified to Phosphoserine. The tract at residues 80–82 (PPP) is interaction with phosphoinositide-3 kinase. Residues 86–106 (EWVKFCRQLFGGFSILLWIGA) form a helical membrane-spanning segment. Residues 107–129 (ILCFLAFGIQAAMEDEPSNDNLY) lie on the Extracellular side of the membrane. Residues 130–150 (LGVVLAAVVIVTGCFSYYQEA) form a helical membrane-spanning segment. Residues 151–286 (KSSKIMDSFK…VGRTPIAMEI (136 aa)) are Cytoplasmic-facing. Positions 212 to 227 (DNSSLTGESEPQTRSP) are enriched in polar residues. Positions 212-231 (DNSSLTGESEPQTRSPEFTH) are disordered. Residues 287–306 (EHFIQLITGVAVFLGVSFFV) form a helical membrane-spanning segment. The Extracellular segment spans residues 307–318 (LSLILGYSWLEA). Residues 319–336 (VIFLIGIIVANVPEGLLA) form a helical membrane-spanning segment. At 337–769 (TVTVCLTLTA…EEGRLIFDNL (433 aa)) the chain is on the cytoplasmic side. Aspartate 374 functions as the 4-aspartylphosphate intermediate in the catalytic mechanism. Serine 439, serine 450, serine 496, and serine 559 each carry phosphoserine. Threonine 570 is subject to Phosphothreonine. Phosphoserine occurs at positions 587 and 672. 2 residues coordinate Mg(2+): aspartate 714 and aspartate 718. The chain crosses the membrane as a helical span at residues 770-789 (KKSIAYTLTSNIPEITPFLL). Residues 790–799 (FIIANIPLPL) are Extracellular-facing. The chain crosses the membrane as a helical span at residues 800-820 (GTVTILCIDLGTDMVPAISLA). Residues 821 to 840 (YEAAESDIMKRQPRNPQTDK) lie on the Cytoplasmic side of the membrane. The residue at position 826 (serine 826) is a Phosphoserine. Residues 841–863 (LVNERLISMAYGQIGMIQALGGF) traverse the membrane as a helical segment. Over 864–915 (FTYFVILAENGFLPSRLLGIRLDWDDRSMNDLEDSYGQEWTYEQRKVVEFTC) the chain is Extracellular. A helical membrane pass occupies residues 916–935 (HTAFFASIVVVQWADLIICK). The Cytoplasmic portion of the chain corresponds to 936 to 948 (TRRNSVFQQGMKN). Serine 940 carries the phosphoserine; by PKA modification. Residues 949–967 (KILIFGLLEETALAAFLSY) form a helical membrane-spanning segment. Residues 968 to 982 (CPGMGVALRMYPLKV) are Extracellular-facing. A helical membrane pass occupies residues 983–1003 (TWWFCAFPYSLLIFIYDEVRK). The Cytoplasmic segment spans residues 1004–1020 (LILRRYPGGWVEKETYY).

Belongs to the cation transport ATPase (P-type) (TC 3.A.3) family. Type IIC subfamily. The sodium/potassium-transporting ATPase is composed of a catalytic alpha subunit, an auxiliary non-catalytic beta subunit and an additional regulatory subunit. Interacts with regulatory subunit FXYD1.

It localises to the membrane. The protein resides in the cell membrane. The enzyme catalyses K(+)(out) + Na(+)(in) + ATP + H2O = K(+)(in) + Na(+)(out) + ADP + phosphate + H(+). In terms of biological role, this is the catalytic component of the active enzyme, which catalyzes the hydrolysis of ATP coupled with the exchange of sodium and potassium ions across the plasma membrane. This action creates the electrochemical gradient of sodium and potassium, providing the energy for active transport of various nutrients. This chain is Sodium/potassium-transporting ATPase subunit alpha-2 (ATP1A2), found in Bos taurus (Bovine).